Reading from the N-terminus, the 143-residue chain is Large ribosomal subunit protein uL11 (143 aa).

Belongs to the universal ribosomal protein uL11 family. Part of the ribosomal stalk of the 50S ribosomal subunit. Interacts with L10 and the large rRNA to form the base of the stalk. L10 forms an elongated spine to which L12 dimers bind in a sequential fashion forming a multimeric L10(L12)X complex. In terms of processing, one or more lysine residues are methylated.

In terms of biological role, forms part of the ribosomal stalk which helps the ribosome interact with GTP-bound translation factors. The polypeptide is Large ribosomal subunit protein uL11 (Methylibium petroleiphilum (strain ATCC BAA-1232 / LMG 22953 / PM1)).